A 488-amino-acid chain; its full sequence is MRTNPLVLGVSALVEKNVGRIAQIIGPVLDVSFPPGNMPNIYNSLIVKGQGTAGQEIQVTCEVQQLLGNHKVRAVAMSATDGLTRGMRVIDTGAPLSVPVGGATLGRIFNVLGEPVDNLGPVDARITSPIHRSAPAFTELDTKLSIFETGIKVVDLLAPYRRGGKIGLFGGAGVGKTVLIMELINNIAKAHGGVSVFGGVGERTREGNDLYMEMKESGVIDEQNISESKVALVYGQMNEPPGARMRVGLTALTMAEYFRDVNEQDVLSFIDNIFRFVQAGSEVSALLGRMPSAVGYQPTLATEMGSLQERITSTKRGSITSIQAVYVPADDLTDPAPATTFAHLDATTVPSRGLAAKGIYPAVDPLDSTSTMLQPWIVGEEHYETAQGVKQTLQRYKELQDIIAIPGLDELSEEDRLIVARARKIERFLSQPFFVAEVFTGFPGKYVGLMETIRGFQMILSGELEQSFYLVGNIDEATAKAMNSKTES.

Gly170 to Thr177 provides a ligand contact to ATP.

Belongs to the ATPase alpha/beta chains family. As to quaternary structure, F-type ATPases have 2 components, CF(1) - the catalytic core - and CF(0) - the membrane proton channel. CF(1) has five subunits: alpha(3), beta(3), gamma(1), delta(1), epsilon(1). CF(0) has four main subunits: a(1), b(1), b'(1) and c(9-12).

Its subcellular location is the plastid. The protein localises to the chloroplast thylakoid membrane. The enzyme catalyses ATP + H2O + 4 H(+)(in) = ADP + phosphate + 5 H(+)(out). Its function is as follows. Produces ATP from ADP in the presence of a proton gradient across the membrane. The catalytic sites are hosted primarily by the beta subunits. The protein is ATP synthase subunit beta, chloroplastic of Picea abies (Norway spruce).